The primary structure comprises 160 residues: Protein Vago (160 aa).

The signal sequence occupies residues 1–23; that stretch reads MESISSMIYLVAMMSLIIGGSQA.

As to expression, expressed in fat body.

It is found in the secreted. In terms of biological role, probably involved in the antiviral immune response. May have a role in controlling viral load in the adult fat body, after infection with viruses such as the Drosophila C virus. This Drosophila melanogaster (Fruit fly) protein is Protein Vago.